The following is a 276-amino-acid chain: NAD-capped RNA hydrolase NudC (276 aa).

Arg82 contributes to the substrate binding site. Residues Cys112 and Cys115 each coordinate Zn(2+). Glu125 is a substrate binding site. Zn(2+) is bound by residues Cys130 and Cys133. Tyr138 is a binding site for substrate. The 124-residue stretch at 139–262 (PRISPSMIVL…SIARYLIDLY (124 aa)) folds into the Nudix hydrolase domain. A divalent metal cation-binding residues include Ala172, Glu188, and Glu192. Residues 173–194 (GFAEPGESAEDCLIREVREEVS) carry the Nudix box motif. 206–213 (QCWPFPHS) serves as a coordination point for substrate. Glu233 contacts a divalent metal cation. Ala255 serves as a coordination point for substrate.

This sequence belongs to the Nudix hydrolase family. NudC subfamily. Homodimer. Mg(2+) is required as a cofactor. Requires Mn(2+) as cofactor. The cofactor is Zn(2+).

It carries out the reaction a 5'-end NAD(+)-phospho-ribonucleoside in mRNA + H2O = a 5'-end phospho-adenosine-phospho-ribonucleoside in mRNA + beta-nicotinamide D-ribonucleotide + 2 H(+). The catalysed reaction is NAD(+) + H2O = beta-nicotinamide D-ribonucleotide + AMP + 2 H(+). The enzyme catalyses NADH + H2O = reduced beta-nicotinamide D-ribonucleotide + AMP + 2 H(+). In terms of biological role, mRNA decapping enzyme that specifically removes the nicotinamide adenine dinucleotide (NAD) cap from a subset of mRNAs by hydrolyzing the diphosphate linkage to produce nicotinamide mononucleotide (NMN) and 5' monophosphate mRNA. The NAD-cap is present at the 5'-end of some mRNAs and stabilizes RNA against 5'-processing. Has preference for mRNAs with a 5'-end purine. Catalyzes the hydrolysis of a broad range of dinucleotide pyrophosphates. The chain is NAD-capped RNA hydrolase NudC from Pseudomonas fluorescens (strain ATCC BAA-477 / NRRL B-23932 / Pf-5).